The following is a 222-amino-acid chain: Sigma non-opioid intracellular receptor 1 (222 aa).

At 1 to 6 (MSLIRT) the chain is on the lumenal side. A helical membrane pass occupies residues 7–29 (ILKLVVVVGFLSLTVQFIRHWMA). Over 30 to 222 (NKQYVFTKEE…STFLTESGVL (193 aa)) the chain is Cytoplasmic. Residues 97–104 (SLTEYVLL) are important for ligand-binding. A C-terminal hydrophobic region region spans residues 175 to 222 (FIPSTLGFALADTMFSTQDFLTLFYTARVYVKGMILEASTFLTESGVL).

Belongs to the ERG2 family. As to quaternary structure, homotrimer.

It localises to the nucleus inner membrane. The protein resides in the nucleus outer membrane. It is found in the nucleus envelope. Its subcellular location is the cytoplasmic vesicle. The protein localises to the endoplasmic reticulum membrane. It localises to the membrane. May function in lipid transport from the endoplasmic reticulum and be involved in a wide array of cellular functions probably through regulation of the biogenesis of lipid microdomains at the plasma membrane. May regulate calcium efflux at the endoplasmic reticulum. The sequence is that of Sigma non-opioid intracellular receptor 1 (sigmar1) from Danio rerio (Zebrafish).